The chain runs to 345 residues: Dihydroorotase (345 aa).

Residues H13 and H15 each contribute to the Zn(2+) site. Substrate-binding positions include 15–17 and N41; that span reads HFR. Residues K98, H135, and H173 each contribute to the Zn(2+) site. An N6-carboxylysine modification is found at K98. Position 135 (H135) interacts with substrate. L218 provides a ligand contact to substrate. D246 contributes to the Zn(2+) binding site. The active site involves D246. Residues H250 and A262 each coordinate substrate.

This sequence belongs to the metallo-dependent hydrolases superfamily. DHOase family. Class II DHOase subfamily. In terms of assembly, homodimer. Zn(2+) serves as cofactor.

It carries out the reaction (S)-dihydroorotate + H2O = N-carbamoyl-L-aspartate + H(+). It participates in pyrimidine metabolism; UMP biosynthesis via de novo pathway; (S)-dihydroorotate from bicarbonate: step 3/3. Functionally, catalyzes the reversible cyclization of carbamoyl aspartate to dihydroorotate. The protein is Dihydroorotase of Shewanella piezotolerans (strain WP3 / JCM 13877).